We begin with the raw amino-acid sequence, 50 residues long: Thymosin beta-4 (50 aa).

Residues 1 to 50 form a disordered region; the sequence is MLLPATMSDKPDMAEIEKFDKSKLKKTETQEKNPLPSKETIEQEKQAGES. Serine 8 carries the post-translational modification Phosphoserine. The span at 9–31 shows a compositional bias: basic and acidic residues; sequence DKPDMAEIEKFDKSKLKKTETQE. At lysine 10 the chain carries N6-acetyllysine. Residue lysine 18 is modified to N6-acetyllysine; alternate. Residue lysine 18 forms a Glycyl lysine isopeptide (Lys-Gly) (interchain with G-Cter in SUMO2); alternate linkage. Threonine 29 is subject to Phosphothreonine. Lysine 32 bears the N6-acetyllysine mark. At serine 37 the chain carries Phosphoserine. Lysine 38 is subject to N6-acetyllysine. Residues 39 to 50 show a composition bias toward basic and acidic residues; it reads ETIEQEKQAGES. Phosphothreonine is present on threonine 40. Residue lysine 45 is modified to N6-acetyllysine.

This sequence belongs to the thymosin beta family. In terms of assembly, identified in a complex composed of ACTA1, COBL, GSN AND TMSB4X. Interacts with SERPINB1. AcSDKP is inactivated by ACE, which removes the dipeptide Lys-Pro from its C-terminus. Originally found in thymus but it is widely distributed in many tissues.

Its subcellular location is the cytoplasm. It localises to the cytoskeleton. Functionally, plays an important role in the organization of the cytoskeleton. Binds to and sequesters actin monomers (G actin) and therefore inhibits actin polymerization. In terms of biological role, potent inhibitor of bone marrow derived stem cell differentiation. Acts by inhibits the entry of hematopoietic pluripotent stem cells into the S-phase. The protein is Thymosin beta-4 (Tmsb4x) of Mus musculus (Mouse).